The primary structure comprises 177 residues: MYKNPYGLEIYLIKGDITEIEADAIVNAANSYLQHGGGVAYAIVRKGGYIIQKESDEYVKKFGPVPVGEVAVTSAGKLKAKYVIHAVGPRYGIEGEDKLESAIFKSLLKADELSLSSIAMPAISTGIYGYPFEICARIMANVLKGYKPKTLRKVMICLYTKDAYDVFKSIFNSILKN.

Residues 1 to 175 (MYKNPYGLEI…VFKSIFNSIL (175 aa)) enclose the Macro domain.

This is an uncharacterized protein from Saccharolobus solfataricus (strain ATCC 35092 / DSM 1617 / JCM 11322 / P2) (Sulfolobus solfataricus).